The primary structure comprises 469 residues: Argininosuccinate lyase (469 aa).

This sequence belongs to the lyase 1 family. Argininosuccinate lyase subfamily.

It localises to the cytoplasm. It carries out the reaction 2-(N(omega)-L-arginino)succinate = fumarate + L-arginine. It participates in amino-acid biosynthesis; L-arginine biosynthesis; L-arginine from L-ornithine and carbamoyl phosphate: step 3/3. This chain is Argininosuccinate lyase, found in Burkholderia thailandensis (strain ATCC 700388 / DSM 13276 / CCUG 48851 / CIP 106301 / E264).